Reading from the N-terminus, the 218-residue chain is MGVQCNSKLLLLAVLITIILSSILVQAIPHKQKTSYQQLLLQSEHVQIPITVAEGDTICFNVSDNPCNFSSYWNHNNCELCGWTPFYSEYAGYSENKSCHPRFTCLHDTKGLKLHNVTTNDSGIYTRNVYYCDIPCNISDDHKHNVEDFDNCNTTINRTHYIITVSSSRYSKRTNSHVATHVGWTATVVIIICVLTYVNVTTTLKHRLRTRNNVNHTM.

The N-terminal stretch at 1-27 is a signal peptide; that stretch reads MGVQCNSKLLLLAVLITIILSSILVQA. A helical transmembrane segment spans residues 178–198; it reads VATHVGWTATVVIIICVLTYV.

This sequence belongs to the RL11 family.

It is found in the virion membrane. This is Glycoprotein UL1 (UL1) from Homo sapiens (Human).